The following is a 382-amino-acid chain: Alkanesulfonate monooxygenase (382 aa).

The protein belongs to the SsuD family.

The catalysed reaction is an alkanesulfonate + FMNH2 + O2 = an aldehyde + FMN + sulfite + H2O + 2 H(+). In terms of biological role, catalyzes the desulfonation of aliphatic sulfonates. The polypeptide is Alkanesulfonate monooxygenase (Ectopseudomonas mendocina (strain ymp) (Pseudomonas mendocina)).